We begin with the raw amino-acid sequence, 127 residues long: Small ribosomal subunit protein uS11 (127 aa).

It belongs to the universal ribosomal protein uS11 family. Part of the 30S ribosomal subunit. Interacts with proteins S7 and S18. Binds to IF-3.

Its function is as follows. Located on the platform of the 30S subunit, it bridges several disparate RNA helices of the 16S rRNA. Forms part of the Shine-Dalgarno cleft in the 70S ribosome. The polypeptide is Small ribosomal subunit protein uS11 (Chlorobaculum tepidum (strain ATCC 49652 / DSM 12025 / NBRC 103806 / TLS) (Chlorobium tepidum)).